The sequence spans 430 residues: MANIVVVGTQWGDEGKGKIVDMLAEKADMVTRFQGGNNAGHTVVVDGTQTITHLIPSGILQNKTCLIGNGVVVDPKVLLEEVDKLLGMGVEINADNLLISERAQIIMPYHQAMDHAREAKKGAQKIGTTGRGIGPCYEDKAARKGVRFVDLLDPAVFDSMVREACEEKNFLLTEFFKADPVDPDAIIAEYTEYAKRLAPHVVDVSVVLNQGVKDGKQVLFEGAQGTHLDIDHGTYPFVTSSNTVAGNVCAGSGVGPGQVNEVLGIVKAYTTRVGMGPFPTELEDEVGNRIQEKGAEFGATTGRRRRCGWLDMVLLEATARLNGLTGVAITKLDVLGGLDSLNICTAYECEGETLNFFPADLKVLAKCKPVYETMPGWTEDISGVRNFDDLPENARNYLNRVEELLGAPIKIISVGPGRDETMVVKDPFAG.

Residues 12–18 (GDEGKGK) and 40–42 (GHT) contribute to the GTP site. The active-site Proton acceptor is the Asp13. Residues Asp13 and Gly40 each contribute to the Mg(2+) site. Residues 13–16 (DEGK), 38–41 (NAGH), Thr129, Arg143, Gln224, Thr239, and Arg303 each bind IMP. The active-site Proton donor is the His41. Substrate is bound at residue 299–305 (ATTGRRR). Residues Arg305, 331–333 (KLD), and 413–415 (SVG) each bind GTP.

Belongs to the adenylosuccinate synthetase family. Homodimer. It depends on Mg(2+) as a cofactor.

It localises to the cytoplasm. The enzyme catalyses IMP + L-aspartate + GTP = N(6)-(1,2-dicarboxyethyl)-AMP + GDP + phosphate + 2 H(+). It functions in the pathway purine metabolism; AMP biosynthesis via de novo pathway; AMP from IMP: step 1/2. Its function is as follows. Plays an important role in the de novo pathway of purine nucleotide biosynthesis. Catalyzes the first committed step in the biosynthesis of AMP from IMP. This chain is Adenylosuccinate synthetase, found in Desulfatibacillum aliphaticivorans.